Reading from the N-terminus, the 593-residue chain is Lipolysis-stimulated lipoprotein receptor (593 aa).

A signal peptide spans 1-35; the sequence is MAPAAGACAGAPDSHPATVVFVCLFLIIFCPDPAS. Over 36 to 206 the chain is Extracellular; sequence AIQVTVSDPY…PGFRAGPLED (171 aa). The region spanning 89 to 181 is the Ig-like V-type domain; it reads PASVDNQLNA…DLDGNNEAYA (93 aa). Cysteine 113 and cysteine 165 are oxidised to a cystine. A helical membrane pass occupies residues 207 to 227; sequence WLFVVVVCLASLLLFLLLGIC. The Cytoplasmic portion of the chain corresponds to 228 to 593; sequence WCQCCPHTCC…LALSRESLVV (366 aa). A Phosphothreonine modification is found at threonine 283. A phosphoserine mark is found at serine 308, serine 314, serine 332, serine 375, and serine 379. Residues 375–387 show a composition bias toward basic and acidic residues; sequence SEVTSLHEDDWRS. The segment at 375 to 578 is disordered; that stretch reads SEVTSLHEDD…ETDSQASRER (204 aa). Phosphothreonine is present on threonine 396. Serine 407, serine 410, and serine 436 each carry phosphoserine. Positions 435–444 are enriched in basic and acidic residues; the sequence is RSVDALDDIN. The span at 445-460 shows a compositional bias: low complexity; the sequence is RPGSTESGRSSPPSSG. 2 positions are modified to phosphoserine: serine 471 and serine 473. Residues 472-550 are compositionally biased toward basic and acidic residues; that stretch reads RSRDDLYDPD…GSGERRRVYR (79 aa). Residue tyrosine 478 is modified to Phosphotyrosine. Serine 575 bears the Phosphoserine mark. Lysine 582 participates in a covalent cross-link: Glycyl lysine isopeptide (Lys-Gly) (interchain with G-Cter in ubiquitin). Serine 587 and serine 590 each carry phosphoserine.

Belongs to the immunoglobulin superfamily. LISCH7 family. As to quaternary structure, homotrimer or homotetramer constituted of isoform 1 and/or isoform 2 and isoform 3. Assembles into cell-cell contacts. Interacts (via the cytoplasmic domain) with MARVELD2 (via C-terminal cytoplasmic domain); the interaction is required to recruit MARVELD2 to tricellular contacts. Interacts with OCLN. In terms of processing, phosphorylation at Ser-308 by MAPK8/JNK1 and MAPK9/JNK2 may be required for exclusive localization at tricellular tight junstions. Polyubiquitinated at Lys-582 via 'Lys-63'-linked ubiquitin chains; deubiquitinated by USP53. In terms of tissue distribution, specifically expressed in liver. Also detected in kidney and lung.

The protein localises to the cell membrane. It localises to the cell junction. Its subcellular location is the tight junction. Probable role in the clearance of triglyceride-rich lipoprotein from blood. Binds chylomicrons, LDL and VLDL in presence of free fatty acids and allows their subsequent uptake in the cells. Maintains epithelial barrier function by recruiting MARVELD2/tricellulin to tricellular tight junctions. The sequence is that of Lipolysis-stimulated lipoprotein receptor from Rattus norvegicus (Rat).